The primary structure comprises 436 residues: Adenylosuccinate synthetase (436 aa).

GTP is bound by residues 12–18 and 40–42; these read GDEGKGK and GHT. Aspartate 13 (proton acceptor) is an active-site residue. 2 residues coordinate Mg(2+): aspartate 13 and glycine 40. IMP is bound by residues 13 to 16, 38 to 41, threonine 128, arginine 142, glutamine 223, threonine 238, and arginine 302; these read DEGK and NAGH. Histidine 41 serves as the catalytic Proton donor. 298–304 serves as a coordination point for substrate; that stretch reads TTTGRRR. GTP contacts are provided by residues arginine 304, 330 to 332, and 412 to 414; these read KLD and SLG.

Belongs to the adenylosuccinate synthetase family. As to quaternary structure, homodimer. Mg(2+) serves as cofactor.

It localises to the cytoplasm. It carries out the reaction IMP + L-aspartate + GTP = N(6)-(1,2-dicarboxyethyl)-AMP + GDP + phosphate + 2 H(+). Its pathway is purine metabolism; AMP biosynthesis via de novo pathway; AMP from IMP: step 1/2. Plays an important role in the de novo pathway of purine nucleotide biosynthesis. Catalyzes the first committed step in the biosynthesis of AMP from IMP. This Prochlorococcus marinus (strain MIT 9215) protein is Adenylosuccinate synthetase.